A 698-amino-acid polypeptide reads, in one-letter code: Nitric oxide-associated protein 1 (698 aa).

The tract at residues 42–66 (FQHSSSLGRELPYDPVDTEGFGEGG) is disordered. Tyr-77 is modified (phosphotyrosine). 2 disordered regions span residues 80–134 (DPEP…DPAL) and 279–306 (LAPG…PNWS). A compositionally biased stretch (basic and acidic residues) spans 102-126 (ERQRQQRREERRQQNLRARSREHPV). Residues 202 to 503 (LELVSAALRR…FYDTPGITKE (302 aa)) enclose the CP-type G domain.

Belongs to the TRAFAC class YlqF/YawG GTPase family. NOA1 subfamily. In terms of assembly, homodimer or multimer. Interacts with mitochondrial complex I, DAP3, MRPL12 and MRPS27.

The protein resides in the mitochondrion inner membrane. Functionally, involved in regulation of mitochondrial protein translation and respiration. Plays a role in mitochondria-mediated cell death. May act as a scaffolding protein or stabilizer of respiratory chain supercomplexes. Binds GTP. The chain is Nitric oxide-associated protein 1 (NOA1) from Homo sapiens (Human).